Consider the following 218-residue polypeptide: Ribose-5-phosphate isomerase A (218 aa).

Substrate is bound by residues 28-31 (TGST), 81-84 (DGAD), and 94-97 (KGGG). E103 functions as the Proton acceptor in the catalytic mechanism. Substrate is bound at residue K121.

This sequence belongs to the ribose 5-phosphate isomerase family. In terms of assembly, homodimer.

It carries out the reaction aldehydo-D-ribose 5-phosphate = D-ribulose 5-phosphate. Its pathway is carbohydrate degradation; pentose phosphate pathway; D-ribose 5-phosphate from D-ribulose 5-phosphate (non-oxidative stage): step 1/1. Its function is as follows. Catalyzes the reversible conversion of ribose-5-phosphate to ribulose 5-phosphate. The polypeptide is Ribose-5-phosphate isomerase A (Psychromonas ingrahamii (strain DSM 17664 / CCUG 51855 / 37)).